Reading from the N-terminus, the 367-residue chain is Voltage-gated potassium channel subunit beta-2 (367 aa).

Phosphoserine occurs at positions 9, 14, and 20. Arg-28 is modified (asymmetric dimethylarginine; alternate). Position 28 is an omega-N-methylarginine; alternate (Arg-28). Ser-31 bears the Phosphoserine mark. NADP(+) contacts are provided by Thr-56, Trp-57, Gln-63, and Asp-85. Tyr-90 serves as the catalytic Proton donor/acceptor. The residue at position 112 (Ser-112) is a Phosphoserine. Lys-124 is modified (N6-acetyllysine). The NADP(+) site is built by Asn-158, Ser-188, Arg-189, Gln-214, Trp-243, Ser-244, Pro-245, Leu-246, Ala-247, Cys-248, Lys-254, Tyr-262, Arg-264, Gly-323, Ser-325, Gln-329, Glu-332, and Asn-333.

The protein belongs to the shaker potassium channel beta subunit family. In terms of assembly, homotetramer. Interaction with tetrameric potassium channel alpha subunits gives rise to a heterooctamer. Identified in potassium channel complexes containing KCNA1, KCNA2, KCNA4, KCNA5, KCNA6, KCNAB1, KCNAB2 and KCND3. Interacts (in unphosphorylated form) with MAPRE1. Forms a ternary complex with SQSTM1 and PRKCZ. In terms of processing, phosphorylated by PRKCZ; may be regulated by incorporation in a complex composed of PRKCZ and SQSTM1. In terms of tissue distribution, detected in brain. Detected at basket cell terminals in cerebellum and in the juxtaparanodal region of nodes of Ranvier (at protein level). Strongest expression in brain and eye. Highest levels in brain detected in brainstem and diencephalon. Strong expression also detected in lung and heart. Moderate expression in kidney, T-lymphocytes and skeletal muscle.

Its subcellular location is the cytoplasm. The protein localises to the membrane. The protein resides in the cell membrane. It is found in the cell projection. It localises to the axon. Its subcellular location is the synapse. The protein localises to the synaptosome. The protein resides in the cytoskeleton. It catalyses the reaction hydroxyacetone + NADP(+) = methylglyoxal + NADPH + H(+). It carries out the reaction (E)-4-oxonon-2-en-1-ol + NADP(+) = (E)-4-oxonon-2-enal + NADPH + H(+). Regulatory subunit of the voltage-gated potassium (Kv) Shaker channel family. Shaker channels are composed of pore-forming and potassium-conducting alpha subunits and of regulatory beta subunits. The beta-2/KCNAB2 subunit promotes potassium channel closure via a mechanism that does not involve physical obstruction of the channel pore. Promotes the inactivation of Kv1.4/KCNA4 and Kv1.5/KCNA5 alpha subunit-containing channels. Displays nicotinamide adenine dinucleotide phosphate (NADPH)-dependent aldoketoreductase activity by catalyzing the NADPH-dependent reduction of a wide range of aldehyde and ketone substrates. Substrate specificity includes methylglyoxal, 9,10-phenanthrenequinone, prostaglandin J2, 4-nitrobenzaldehyde, 4-nitroacetophenone and 4-oxo-trans-2-nonenal (in vitro, no physiological substrate identified yet). The binding of oxidized and reduced nucleotide cofactors alters Kv channel gating and may contribute to dynamic fine tuning of cell excitability. Contributes to the regulation of nerve signaling, and prevents neuronal hyperexcitability. The sequence is that of Voltage-gated potassium channel subunit beta-2 from Mus musculus (Mouse).